A 320-amino-acid polypeptide reads, in one-letter code: Solute carrier family 25 member 33 (320 aa).

Solcar repeat units follow at residues Glu9–Gln118, Asn126–Cys213, and Ser231–Leu315. 6 helical membrane-spanning segments follow: residues Leu12 to Leu32, Val49 to Val65, Gly121 to Val141, Leu190 to Leu210, Phe233 to Pro253, and Gln298 to Glu318.

The protein belongs to the mitochondrial carrier (TC 2.A.29) family.

It localises to the mitochondrion inner membrane. The catalysed reaction is UTP(in) + UDP(out) = UTP(out) + UDP(in). The enzyme catalyses dUTP(out) + UTP(in) = dUTP(in) + UTP(out). It carries out the reaction 5-methyl-UTP(out) + UTP(in) = 5-methyl-UTP(in) + UTP(out). It catalyses the reaction 5-methyl-UDP(out) + UTP(in) = 5-methyl-UDP(in) + UTP(out). The catalysed reaction is UTP(in) + CTP(out) = UTP(out) + CTP(in). The enzyme catalyses CDP(out) + UTP(in) = CDP(in) + UTP(out). It carries out the reaction dCTP(out) + UTP(in) = dCTP(in) + UTP(out). It catalyses the reaction dCDP(out) + UTP(in) = dCDP(in) + UTP(out). The catalysed reaction is UTP(in) + GTP(out) = UTP(out) + GTP(in). The enzyme catalyses UTP(in) + GDP(out) = UTP(out) + GDP(in). It carries out the reaction dGTP(out) + UTP(in) = dGTP(in) + UTP(out). It catalyses the reaction dGDP(out) + UTP(in) = dGDP(in) + UTP(out). The catalysed reaction is ITP(out) + UTP(in) = ITP(in) + UTP(out). Mitochondrial transporter that imports/exports pyrimidine nucleotides into and from mitochondria. Selectively transports uridine, thymidine, guanosine, cytosine and inosine (deoxy)nucleoside di- and triphosphates by an antiport mechanism. May import (deoxy)nucleoside triphosphates in exchange for intramitochondrial (deoxy)nucleoside diphosphates, thus providing precursors necessary for de novo synthesis of mitochondrial DNA and RNA while exporting products of their catabolism. Participates in mitochondrial genome maintenance, regulation of mitochondrial membrane potential and mitochondrial respiration. Upon INS or IGF1 stimulation regulates cell growth and proliferation by controlling mitochondrial DNA replication and transcription, the ratio of mitochondria-to nuclear-encoded components of the electron transport chain resulting in control of mitochondrial ROS production. Participates in dendritic cell endocytosis and may associate with mitochondrial oxidative phosphorylation. The protein is Solute carrier family 25 member 33 (Slc25a33) of Mus musculus (Mouse).